The primary structure comprises 368 residues: Probable magnesium transporter NIPA3 (368 aa).

At 1–18 the chain is on the extracellular side; that stretch reads MASLSGSWRDAYKGMSSD. Residues 19 to 39 traverse the membrane as a helical segment; the sequence is NIKGLVLALSSSLFIGASFIV. Residues 40-66 are Cytoplasmic-facing; that stretch reads KKKGLKRAGASGLRAGSGGYSYLLEPL. Residues 67–87 form a helical membrane-spanning segment; sequence WWVGMITMIVGEIANFAAYAF. At 88 to 90 the chain is on the extracellular side; that stretch reads APA. The chain crosses the membrane as a helical span at residues 91-111; the sequence is ILVTPLGALSIIISAALAHVI. Residues 112-115 lie on the Cytoplasmic side of the membrane; sequence LHEK. The chain crosses the membrane as a helical span at residues 116 to 136; that stretch reads LHTFGLLGCVLCVVGSITIVL. Over 137–157 the chain is Extracellular; it reads HAPQEQEIDSVLQVWNLATEP. A helical membrane pass occupies residues 158–178; it reads AFLLYAAAVVGAAIILIVQFV. At 179–189 the chain is on the cytoplasmic side; that stretch reads PQYGQSHVMVY. The helical transmembrane segment at 190–210 threads the bilayer; sequence IGVCSLVGSLSVMSVKALGIA. Topologically, residues 211 to 220 are extracellular; that stretch reads LKLTFSGMNQ. Residues 221–241 form a helical membrane-spanning segment; the sequence is LIYPQTWVFTLIVLTCVITQM. The Cytoplasmic portion of the chain corresponds to 242–255; that stretch reads NYLNKALDTFNTAV. Residues 256–276 form a helical membrane-spanning segment; it reads VSPIYYVMFTSLTILASVIMF. At 277–283 the chain is on the extracellular side; it reads KDWDRQD. The chain crosses the membrane as a helical span at residues 284–304; that stretch reads GTQIVTELCGFVTILSGTFLL. Residues 305 to 368 are Cytoplasmic-facing; it reads HKTKDMVDGS…ILPQDGPEAV (64 aa).

This sequence belongs to the NIPA (TC 2.A.7) family. Homodimer.

Its subcellular location is the cell membrane. The protein resides in the early endosome. Functionally, acts as a Mg(2+) transporter. Can also transport other divalent cations such as Fe(2+), Sr(2+), Ba(2+), Mn(2+) and Co(2+) but to a much less extent than Mg(2+). The chain is Probable magnesium transporter NIPA3 from Arabidopsis thaliana (Mouse-ear cress).